A 326-amino-acid chain; its full sequence is Tagatose 1,6-diphosphate aldolase (326 aa).

The protein belongs to the aldolase LacD family.

The enzyme catalyses D-tagatofuranose 1,6-bisphosphate = D-glyceraldehyde 3-phosphate + dihydroxyacetone phosphate. Its pathway is carbohydrate metabolism; D-tagatose 6-phosphate degradation; D-glyceraldehyde 3-phosphate and glycerone phosphate from D-tagatose 6-phosphate: step 2/2. The sequence is that of Tagatose 1,6-diphosphate aldolase from Staphylococcus aureus (strain Mu3 / ATCC 700698).